The primary structure comprises 963 residues: MPVARPQAAGPDRISLFLVAFLLGSPAAAQAEDGGPEGEMHPSTAYLLPSASLESSLEEGVTSAAPGLLPSQEALEAMEESLPPALPDEASVQHTPALRKGLPSLKQLNSARRQLRPLATPTTLQRLGSPASATTKLREPEDPEQPTAPAPLQIAPFTALATTLPHSPQPAQAPDDSSPGSPLDKGDNELTGSASEESQETTTSTIVTTTIITTEQAPALCGVSFSDPEGYIDSSDFPPQPYSSFLECTYNVTVYTGYGVELQVKSVNLSEGELLSIRGVDGPTLTVLANQTLLVEGQVIRSPTNTISVYFRTFQDDGLGTFQLHYQAFMLSCPFPRRPDAGEVTVMDLHSGGVAHFHCHLGYELQGAKTLTCINASKPHWSSQEPVCSAPCGGAVHNATIGRVLSPSFPGTANGSQLCVWTIEAPEGQKLHLHLERLLLHEKDRMIVYSGRTNTSALLYDSLRTESVPFEGLLSEGSSIRIEFTSDQGQAASAFNIRFEAFEKGHCYEPYIQNGNFTTSDPTYNIGTIVEFTCDPGHSLEQGPAVIECVNVRDPYWNDTEPLCRAMCGGELSAVAGVVLSPNWPEPYAEGEDCVWKIHVGEEKRIFLDIQFLNLSNSDILTIYDGDEVVPHVLGQYFGHSSPQKLYSSTPDLTIQFHSDPAGLIFGKGQGFIMNYIEVSRNDSCSDLPEIQNGWKTTSHTELVRGARITYQCDPGYDIVGSDTLTCQWDLSWSSDPPFCEKIMYCTDPGEVEHSTRLISDPVLLVGTTIQYTCSPGFVLEGSSLLTCYSRETGTPIWTSRLPHCVSEESLACDNPGLPENGYQILYKRLYLPGESLTFMCYEGFELMGEVTIRCILGQPSHWSGPLPICKVNQDSFEHALEAEAAAESSLEGGNMALAIFIPVLLISLLLGGAYIYVTRCRQYSSLRLPLMYSHPYSQITVETEFDNPIYETGETREYEVSI.

The first 31 residues, 1-31, serve as a signal peptide directing secretion; the sequence is MPVARPQAAGPDRISLFLVAFLLGSPAAAQA. Disordered stretches follow at residues 28–63, 116–150, and 164–204; these read AAQA…GVTS, RPLA…TAPA, and LPHS…TTTS. Topologically, residues 32 to 897 are extracellular; that stretch reads EDGGPEGEMH…ESSLEGGNMA (866 aa). A compositionally biased stretch (low complexity) spans 47–59; it reads LLPSASLESSLEE. The segment covering 120-135 has biased composition (polar residues); sequence TPTTLQRLGSPASATT. Over residues 191-204 the composition is skewed to low complexity; that stretch reads TGSASEESQETTTS. Cysteine 221 and cysteine 248 are disulfide-bonded. In terms of domain architecture, CUB 1 spans 221-329; the sequence is CGVSFSDPEG…GTFQLHYQAF (109 aa). 3 N-linked (GlcNAc...) asparagine glycosylation sites follow: asparagine 251, asparagine 268, and asparagine 290. The Sushi 1 domain occupies 331 to 390; the sequence is LSCPFPRRPDAGEVTVMDLHSGGVAHFHCHLGYELQGAKTLTCINASKPHWSSQEPVCSA. Cystine bridges form between cysteine 333/cysteine 373, cysteine 359/cysteine 388, and cysteine 392/cysteine 419. N-linked (GlcNAc...) asparagine glycans are attached at residues asparagine 375, asparagine 398, asparagine 414, asparagine 454, asparagine 516, and asparagine 558. The CUB 2 domain occupies 392-502; it reads CGGAVHNATI…SAFNIRFEAF (111 aa). The Sushi 2 domain occupies 505–566; that stretch reads GHCYEPYIQN…WNDTEPLCRA (62 aa). Cystine bridges form between cysteine 507–cysteine 549, cysteine 534–cysteine 564, and cysteine 568–cysteine 594. Positions 568-679 constitute a CUB 3 domain; sequence CGGELSAVAG…QGFIMNYIEV (112 aa). Asparagine 614 and asparagine 682 each carry an N-linked (GlcNAc...) asparagine glycan. Sushi domains are found at residues 683 to 742, 744 to 807, and 811 to 872; these read DSCS…FCEK, MYCT…HCVS, and LACD…ICKV. 6 disulfide bridges follow: cysteine 685–cysteine 727, cysteine 713–cysteine 740, cysteine 746–cysteine 788, cysteine 774–cysteine 805, cysteine 813–cysteine 855, and cysteine 841–cysteine 870. Residues 898 to 918 form a helical membrane-spanning segment; the sequence is LAIFIPVLLISLLLGGAYIYV. Residues 919-963 lie on the Cytoplasmic side of the membrane; the sequence is TRCRQYSSLRLPLMYSHPYSQITVETEFDNPIYETGETREYEVSI.

It belongs to the SEZ6 family. In terms of tissue distribution, expressed exclusively in the brain, predominantly in neurons. Wide expression in the gray matter of the brain with high levels in the olfactory bulb, anterior olfactory nuclei, hippocampal formation and cerebellar cortex. Detected diffusely and weakly in the white matter, such as the corpus callosum and cerebellar medulla. In the cerebellar cortex, intensely expressed in Purkinje cells and granule cells. Detected also in interneurons in the molecular layer.

It localises to the cell membrane. The protein localises to the endoplasmic reticulum membrane. Candidate tumor suppressor gene. May contribute to specialized endoplasmic reticulum functions in neurons. This is Seizure 6-like protein (Sez6l) from Mus musculus (Mouse).